The sequence spans 234 residues: Large ribosomal subunit protein uL1 (234 aa).

The protein belongs to the universal ribosomal protein uL1 family. In terms of assembly, part of the 50S ribosomal subunit.

In terms of biological role, binds directly to 23S rRNA. The L1 stalk is quite mobile in the ribosome, and is involved in E site tRNA release. Its function is as follows. Protein L1 is also a translational repressor protein, it controls the translation of the L11 operon by binding to its mRNA. The polypeptide is Large ribosomal subunit protein uL1 (Desulfatibacillum aliphaticivorans).